The sequence spans 218 residues: GILT-like protein ZK669.3 (218 aa).

Positions 1–21 (MRRLNGVFICLILFITKISYA) are cleaved as a signal peptide. Asn129 and Asn185 each carry an N-linked (GlcNAc...) asparagine glycan.

It belongs to the GILT family.

Its subcellular location is the secreted. The protein is GILT-like protein ZK669.3 of Caenorhabditis elegans.